The sequence spans 405 residues: MAAALQTNIRTVKVPATFRAVSKQSLAPFRVRCAVASPGKKRYTITLLPGDGIGPEVVSIAKNVLQQAGSLEGVEFNFREMPIGGAALDLVGVPLPEETISAAKESDAVLLGAIGGYKWDNNEKHLRPEKGLLQIRAALKVFANLRPATVLPQLVDASTLKREVAEGVDLMVVRELTGGIYFGEPRGIKTNENGEEVGFNTEVYAAHEIDRIARVAFETARKRRGKLCSVDKANVLEASILWRKRVTALASEYPDVELSHMYVDNAAMQLVRDPKQFDTIVTNNIFGDILSDEASMITGSIGMLPSASLSDSGPGLFEPIHGSAPDIAGQDKANPLATILSAAMLLKYGLGEEKAAKRIEDAVLVALNNGFRTGDIYSAGTKLVGCKEMGEEVLKSVDSQVPASV.

The N-terminal 33 residues, 1-33 (MAAALQTNIRTVKVPATFRAVSKQSLAPFRVRC), are a transit peptide targeting the chloroplast. Residue Ser-70 is modified to Phosphoserine. Position 114–129 (114–129 (IGGYKWDNNEKHLRPE)) interacts with NAD(+). Substrate is bound by residues Arg-136, Arg-146, and Arg-174. Asn-234 provides a ligand contact to NAD(+). Asp-264 is a substrate binding site. A Mg(2+)-binding site is contributed by Asp-264. NAD(+) is bound at residue Asn-265. 2 residues coordinate Mg(2+): Asp-288 and Asp-292. Position 318–334 (318–334 (EPIHGSAPDIAGQDKAN)) interacts with NAD(+).

The protein belongs to the isocitrate and isopropylmalate dehydrogenases family. Homodimer. The cofactor is Mg(2+). Requires Mn(2+) as cofactor. As to expression, expressed at low levels in seedlings, cotyledons, hypocotyls, flowers, roots, pollen, leaves and stems.

The protein resides in the plastid. The protein localises to the chloroplast stroma. The enzyme catalyses (2R,3S)-3-isopropylmalate + NAD(+) = 4-methyl-2-oxopentanoate + CO2 + NADH. The protein operates within amino-acid biosynthesis; L-leucine biosynthesis; L-leucine from 3-methyl-2-oxobutanoate: step 3/4. With respect to regulation, regulated by a thiol-based redox modification. Its function is as follows. Involved in leucine biosynthesis; catalyzes the oxidative decarboxylation step in leucine biosynthesis (primary metabolism). Catalyzes the oxidation of 3-carboxy-2-hydroxy-4-methylpentanoate (3-isopropylmalate, 3-IPM) to 3-carboxy-4-methyl-2-oxopentanoate. The product decarboxylates to 4-methyl-2 oxopentanoate. Required during pollen development and involved in embryo sac development. The chain is 3-isopropylmalate dehydrogenase 2, chloroplastic from Arabidopsis thaliana (Mouse-ear cress).